A 250-amino-acid chain; its full sequence is Hydroxyethylthiazole kinase (250 aa).

M39 contributes to the substrate binding site. The ATP site is built by R114 and T159. Residue G186 coordinates substrate.

Belongs to the Thz kinase family. Requires Mg(2+) as cofactor.

It carries out the reaction 5-(2-hydroxyethyl)-4-methylthiazole + ATP = 4-methyl-5-(2-phosphooxyethyl)-thiazole + ADP + H(+). Its pathway is cofactor biosynthesis; thiamine diphosphate biosynthesis; 4-methyl-5-(2-phosphoethyl)-thiazole from 5-(2-hydroxyethyl)-4-methylthiazole: step 1/1. In terms of biological role, catalyzes the phosphorylation of the hydroxyl group of 4-methyl-5-beta-hydroxyethylthiazole (THZ). This chain is Hydroxyethylthiazole kinase, found in Lactococcus lactis subsp. cremoris (strain MG1363).